The primary structure comprises 461 residues: Cysteine--tRNA ligase (461 aa).

Cysteine 28 is a binding site for Zn(2+). The short motif at 30–40 (VTIYDLCHIGH) is the 'HIGH' region element. Positions 209, 234, and 238 each coordinate Zn(2+). A 'KMSKS' region motif is present at residues 266-270 (KMSKS). ATP is bound at residue lysine 269.

It belongs to the class-I aminoacyl-tRNA synthetase family. As to quaternary structure, monomer. The cofactor is Zn(2+).

Its subcellular location is the cytoplasm. It carries out the reaction tRNA(Cys) + L-cysteine + ATP = L-cysteinyl-tRNA(Cys) + AMP + diphosphate. The polypeptide is Cysteine--tRNA ligase (Edwardsiella ictaluri (strain 93-146)).